A 535-amino-acid chain; its full sequence is Probable glucomannan 4-beta-mannosyltransferase 14 (535 aa).

The chain crosses the membrane as a helical span at residues Gln-42–Val-62. The active site involves Asp-131. Asp-193 and Asp-195 together coordinate substrate. Asp-287 is an active-site residue. The next 4 helical transmembrane spans lie at Ile-366–Phe-386, Ile-403–Leu-423, Ile-482–Tyr-502, and Leu-503–Gly-523.

Belongs to the glycosyltransferase 2 family. Plant cellulose synthase-like A subfamily.

The protein resides in the golgi apparatus membrane. The catalysed reaction is GDP-mannose + (glucomannan)n = GDP + (glucomannan)n+1.. Its function is as follows. Probable mannan synthase which consists of a 4-beta-mannosyltransferase activity on mannan using GDP-mannose. The beta-1,4-mannan product is the backbone for galactomannan synthesis by galactomannan galactosyltransferase. Galactomannan is a noncellulosic polysaccharides of plant cell wall. This Arabidopsis thaliana (Mouse-ear cress) protein is Probable glucomannan 4-beta-mannosyltransferase 14.